The following is a 540-amino-acid chain: Eukaryotic translation initiation factor 3 subunit L (540 aa).

Residues 307–515 form the PCI domain; the sequence is TFSDILLYIQ…IHIADTKVSH (209 aa).

It belongs to the eIF-3 subunit L family. In terms of assembly, component of the eukaryotic translation initiation factor 3 (eIF-3) complex. The eIF-3 complex interacts with pix.

Its subcellular location is the cytoplasm. Functionally, component of the eukaryotic translation initiation factor 3 (eIF-3) complex, which is involved in protein synthesis of a specialized repertoire of mRNAs and, together with other initiation factors, stimulates binding of mRNA and methionyl-tRNAi to the 40S ribosome. The eIF-3 complex specifically targets and initiates translation of a subset of mRNAs involved in cell proliferation. This Drosophila grimshawi (Hawaiian fruit fly) protein is Eukaryotic translation initiation factor 3 subunit L.